The following is a 65-amino-acid chain: Temporin-LK1 (65 aa).

The signal sequence occupies residues M1–C22. A propeptide spanning residues Q23 to Q44 is cleaved from the precursor. Position 63 is a phenylalanine amide (F63).

Expressed by the skin glands.

Its subcellular location is the secreted. Its function is as follows. Has antimicrobial activity against Gram-positive bacteria S.aureus ATCC 2592 (MIC=2.5 uM), S.aureus ATCC 43300 (MIC=2.5 uM) and B.subtilis (MIC=15.0 uM), against Gram-negative bacteria E.coli ML-35P (MIC=30.0 uM), P.aeruginosa PA01 (MIC=2.5 uM) and P.aeruginosa ATCC 27853 (MIC=2.5 uM) and against fungus C.albicans ATCC 2002 (MIC=5.0 uM). The polypeptide is Temporin-LK1 (Limnonectes kuhlii (Kuhl's Creek frog)).